A 414-amino-acid chain; its full sequence is Serine hydroxymethyltransferase (414 aa).

Residues Leu-116 and 120 to 122 (GHL) contribute to the (6S)-5,6,7,8-tetrahydrofolate site. Lys-224 bears the N6-(pyridoxal phosphate)lysine mark. (6S)-5,6,7,8-tetrahydrofolate contacts are provided by residues Glu-240 and 348–350 (SPF).

Belongs to the SHMT family. In terms of assembly, homodimer. It depends on pyridoxal 5'-phosphate as a cofactor.

The protein localises to the cytoplasm. The catalysed reaction is (6R)-5,10-methylene-5,6,7,8-tetrahydrofolate + glycine + H2O = (6S)-5,6,7,8-tetrahydrofolate + L-serine. Its pathway is one-carbon metabolism; tetrahydrofolate interconversion. The protein operates within amino-acid biosynthesis; glycine biosynthesis; glycine from L-serine: step 1/1. In terms of biological role, catalyzes the reversible interconversion of serine and glycine with tetrahydrofolate (THF) serving as the one-carbon carrier. This reaction serves as the major source of one-carbon groups required for the biosynthesis of purines, thymidylate, methionine, and other important biomolecules. Also exhibits THF-independent aldolase activity toward beta-hydroxyamino acids, producing glycine and aldehydes, via a retro-aldol mechanism. In Campylobacter jejuni subsp. jejuni serotype O:2 (strain ATCC 700819 / NCTC 11168), this protein is Serine hydroxymethyltransferase.